Consider the following 138-residue polypeptide: Basic phospholipase A2 Cvv-N6 (138 aa).

Residues M1 to G16 form the signal peptide. Disulfide bonds link C42–C131, C44–C60, C59–C111, C65–C138, C66–C104, C73–C97, and C91–C102. Y43, G45, and G47 together coordinate Ca(2+). H63 is an active-site residue. D64 contributes to the Ca(2+) binding site. The active site involves D105.

This sequence belongs to the phospholipase A2 family. Group II subfamily. D49 sub-subfamily. As to quaternary structure, monomer. Binds to calmodulin. Requires Ca(2+) as cofactor. As to expression, expressed by the venom gland.

The protein localises to the secreted. It catalyses the reaction a 1,2-diacyl-sn-glycero-3-phosphocholine + H2O = a 1-acyl-sn-glycero-3-phosphocholine + a fatty acid + H(+). Heparin and wedelolactone inhibit the myotoxic activity. The PLA2 inhibitor, para-bromophenacyl bromide (BPB), inhibits enzymatic and myotoxic activities. Functionally, snake venom phospholipase A2 (PLA2) that is myotoxic and displays moderate edema-inducing activity in rat paws. Does not show neurotoxic activity. PLA2 catalyzes the calcium-dependent hydrolysis of the 2-acyl groups in 3-sn-phosphoglycerides. In Crotalus viridis viridis (Prairie rattlesnake), this protein is Basic phospholipase A2 Cvv-N6.